Consider the following 362-residue polypeptide: tRNA N6-adenosine threonylcarbamoyltransferase (362 aa).

His116 and His120 together coordinate Fe cation. Residues 138–142, Asp171, Gly184, and Asn284 contribute to the substrate site; that span reads LVSGG. Position 312 (Asp312) interacts with Fe cation.

This sequence belongs to the KAE1 / TsaD family. The cofactor is Fe(2+).

Its subcellular location is the cytoplasm. The catalysed reaction is L-threonylcarbamoyladenylate + adenosine(37) in tRNA = N(6)-L-threonylcarbamoyladenosine(37) in tRNA + AMP + H(+). In terms of biological role, required for the formation of a threonylcarbamoyl group on adenosine at position 37 (t(6)A37) in tRNAs that read codons beginning with adenine. Is involved in the transfer of the threonylcarbamoyl moiety of threonylcarbamoyl-AMP (TC-AMP) to the N6 group of A37, together with TsaE and TsaB. TsaD likely plays a direct catalytic role in this reaction. This Chelativorans sp. (strain BNC1) protein is tRNA N6-adenosine threonylcarbamoyltransferase.